The primary structure comprises 122 residues: Large ribosomal subunit protein uL18 (122 aa).

Positions 1–11 are enriched in basic and acidic residues; the sequence is MLKKPDRNALR. Residues 1–22 form a disordered region; the sequence is MLKKPDRNALRDKRRRRVRKKI. Residues 12 to 22 show a composition bias toward basic residues; it reads DKRRRRVRKKI.

Belongs to the universal ribosomal protein uL18 family. In terms of assembly, part of the 50S ribosomal subunit; part of the 5S rRNA/L5/L18/L25 subcomplex. Contacts the 5S and 23S rRNAs.

Its function is as follows. This is one of the proteins that bind and probably mediate the attachment of the 5S RNA into the large ribosomal subunit, where it forms part of the central protuberance. The protein is Large ribosomal subunit protein uL18 of Pelotomaculum thermopropionicum (strain DSM 13744 / JCM 10971 / SI).